The primary structure comprises 720 residues: DNA ligase (720 aa).

NAD(+) is bound by residues 57–61 (DAEYD), 106–107 (SL), and Glu-140. Catalysis depends on Lys-142, which acts as the N6-AMP-lysine intermediate. Arg-163, Glu-200, Lys-316, and Lys-340 together coordinate NAD(+). Residues Cys-434, Cys-437, Cys-458, and Cys-464 each contribute to the Zn(2+) site. Residues 643–720 (AAASPVSGKT…TEDEWFELVG (78 aa)) enclose the BRCT domain.

It belongs to the NAD-dependent DNA ligase family. LigA subfamily. Mg(2+) serves as cofactor. It depends on Mn(2+) as a cofactor.

It catalyses the reaction NAD(+) + (deoxyribonucleotide)n-3'-hydroxyl + 5'-phospho-(deoxyribonucleotide)m = (deoxyribonucleotide)n+m + AMP + beta-nicotinamide D-nucleotide.. DNA ligase that catalyzes the formation of phosphodiester linkages between 5'-phosphoryl and 3'-hydroxyl groups in double-stranded DNA using NAD as a coenzyme and as the energy source for the reaction. It is essential for DNA replication and repair of damaged DNA. The protein is DNA ligase of Xanthobacter autotrophicus (strain ATCC BAA-1158 / Py2).